The sequence spans 28 residues: Ranatuerin-2B (28 aa).

The cysteines at positions 23 and 28 are disulfide-linked.

Expressed by the skin glands.

It is found in the secreted. In terms of biological role, antibacterial activity against Gram-positive bacterium S.aureus and Gram-negative bacterium E.coli. Has activity against C.albicans. This Lithobates berlandieri (Rio Grande leopard frog) protein is Ranatuerin-2B.